The following is a 188-amino-acid chain: MAKSVPAIFLDRDGTINVDHGYVHEIDAFEFIDGVIDAMRELKKMGYALVVVTNQSGIARGKFTEAQFETLTEWMDWSLADRDVDLDGIYYCPHHPQGSIEEFRQVCDCRKPHPGMLISARDFLHIDMAASYMVGDKLEDMQAAAAANVGTKVLVRTGKPVTAEAENAADWVLNSLADLPSAIKKQQK.

The Nucleophile role is filled by Asp11. Mg(2+) contacts are provided by Asp11 and Asp13. Residues 11 to 13 (DRD), 19 to 22 (DHGY), and 53 to 56 (TNQS) each bind substrate. Asp13 acts as the Proton donor in catalysis. The Zn(2+) site is built by Cys92, His94, Cys107, and Cys109. 110-111 (RK) contributes to the substrate binding site. 2 residues coordinate Mg(2+): Asp136 and Lys137. Residue Lys137 coordinates substrate.

This sequence belongs to the GmhB family. Monomer. Mg(2+) serves as cofactor. Requires Zn(2+) as cofactor.

The protein localises to the cytoplasm. The catalysed reaction is D-glycero-beta-D-manno-heptose 1,7-bisphosphate + H2O = D-glycero-beta-D-manno-heptose 1-phosphate + phosphate. Its pathway is nucleotide-sugar biosynthesis; ADP-L-glycero-beta-D-manno-heptose biosynthesis; ADP-L-glycero-beta-D-manno-heptose from D-glycero-beta-D-manno-heptose 7-phosphate: step 2/4. It functions in the pathway bacterial outer membrane biogenesis; LPS core biosynthesis. Its function is as follows. Converts the D-glycero-beta-D-manno-heptose 1,7-bisphosphate intermediate into D-glycero-beta-D-manno-heptose 1-phosphate by removing the phosphate group at the C-7 position in vitro. Also catalyzes the dephosphorylation of D-glycero-alpha-D-manno-heptose 1,7-bisphosphate and 2-deoxy-D-manno-2-octoulosonate-8-phosphate in vitro. The chain is D-glycero-beta-D-manno-heptose-1,7-bisphosphate 7-phosphatase (gmhB) from Salmonella typhi.